The following is a 310-amino-acid chain: MSNQVLCCVVLCLLGANTVDGGITQSPKYLFRKEGQNVTLSCEQNLNHDAMYWYRQDPGQGLRLIYYSQIVNDFQKGDIAEGYSVSREKKESFPLTVTSAQKNPTAFYLCASSIRSSYEQYFGPGTRLTVTEDLKNVFPPKVAVFEPSEAEISHTQKATLVCLATGFYPDHVELSWWVNGKEVHSGVSTDPQPLKEQPALNDSRYCLSSRLRVSATFWQNPRNHFRCQVQFYGLSENDEWTQDRAKPVTQIVSAEAWGRADCGFTSESYQQGVLSATILYEILLGKATLYAVLVSALVLMAMVKRKDSRG.

The first 21 residues, 1–21 (MSNQVLCCVVLCLLGANTVDG), serve as a signal peptide directing secretion. A t cell receptor beta variable 19 region spans residues 22–114 (GITQSPKYLF…TAFYLCASSI (93 aa)). The Ig-like V-type domain occupies 34-131 (EGQNVTLSCE…FGPGTRLTVT (98 aa)). The N-linked (GlcNAc...) asparagine glycan is linked to Asn-37. An intrachain disulfide couples Cys-42 to Cys-110. The interval 46–50 (LNHDA) is CDR1. Asp-49 contacts a peptide antigen. The tract at residues 68–73 (SQIVND) is CDR2. The interval 110–122 (CASSIRSSYEQYF) is CDR3. A t cell receptor beta joining 2-7 region spans residues 117 to 131 (SYEQYFGPGTRLTVT). The tract at residues 133–310 (DLKNVFPPKV…AMVKRKDSRG (178 aa)) is t cell receptor beta constant 2. An Ig-like C1-type domain is found at 140 to 249 (PKVAVFEPSE…WTQDRAKPVT (110 aa)). Cysteines 162 and 227 form a disulfide. Residue Asn-201 is glycosylated (N-linked (GlcNAc...) asparagine). A connecting peptide region spans residues 262-276 (CGFTSESYQQGVLSA). The chain crosses the membrane as a helical span at residues 277 to 299 (TILYEILLGKATLYAVLVSALVL). The Cytoplasmic segment spans residues 300 to 310 (MAMVKRKDSRG).

Disulfide-linked heterodimer with TRAV27*01J42*01C*01 alpha chain. The TR primarily interacts via its CDR3-beta domain with M/matrix protein 1-derived peptide (GILGFVFTL) displayed by HLA-A*02.01 in a 'peg-notch' recognition mode. The alpha-beta TR associates with the transmembrane signaling CD3 coreceptor proteins to form the TR-CD3 (TCR). The assembly of alpha-beta TR heterodimers with CD3 occurs in the endoplasmic reticulum where a single alpha-beta TR heterodimer associates with one CD3D-CD3E heterodimer, one CD3G-CD3E heterodimer and one CD247 homodimer forming a stable octameric structure. CD3D-CD3E and CD3G-CD3E heterodimers preferentially associate with TR alpha and TR beta chains (via TM domain), respectively. The association of the CD247 homodimer is the last step of TCR assembly in the endoplasmic reticulum and is required for transport to the cell surface. As to expression, expressed in M/matrix protein 1-specific effector memory CD8-positive T cells readily detectable in the peripheral blood, secondary lymphoid organs and lung (primary site of infection) of IAV infected individuals.

The protein resides in the cell membrane. The beta chain of TRAV27*01J42*01C*01/TRBV19*01J2S7*01C*02 alpha-beta T cell receptor (TR) clonotype that is specific for HLA-A*02:01-restricted M/matrix protein 1 immunodominant epitope GILGFVFTL of influenza A virus (IAV). Classified as a public TCR clonotype, it is preferentially selected in effector memory CD8-positive T cells among multiple HLA-A*02:01 carriers/individuals and confers long-lived immunity against IAV infection. Can cross-recognize sporadically emerging IAV variants by molecular mimicry, inducing immunity toward different influenza strains. Antigen recognition initiates TR-CD3 clustering on the cell surface and intracellular activation of LCK that phosphorylates the ITAM motifs of CD3G, CD3D, CD3E and CD247 enabling the recruitment of ZAP70. In turn, ZAP70 phosphorylates LAT, which recruits numerous signaling molecules to form the LAT signalosome. The LAT signalosome propagates signal branching to three major signaling pathways, the calcium, the mitogen-activated protein kinase (MAPK) kinase and the nuclear factor NF-kappa-B (NF-kB) pathways, leading to the mobilization of transcription factors that are critical for gene expression and essential for T cell differentiation into effector/memory T cells. This chain is M1-specific T cell receptor beta chain, found in Homo sapiens (Human).